A 67-amino-acid chain; its full sequence is Large ribosomal subunit protein bL32 (67 aa).

Residues Met1 to Gln19 show a composition bias toward basic residues. The tract at residues Met1–Lys21 is disordered.

The protein belongs to the bacterial ribosomal protein bL32 family.

This is Large ribosomal subunit protein bL32 from Micrococcus luteus (strain ATCC 4698 / DSM 20030 / JCM 1464 / CCM 169 / CCUG 5858 / IAM 1056 / NBRC 3333 / NCIMB 9278 / NCTC 2665 / VKM Ac-2230) (Micrococcus lysodeikticus).